The primary structure comprises 486 residues: Protein DETOXIFICATION 16 (486 aa).

A run of 12 helical transmembrane segments spans residues 35–55, 68–88, 117–137, 142–162, 179–199, 207–227, 259–279, 288–308, 331–351, 365–385, 401–421, and 433–453; these read GPLI…VMFV, IATS…ASAL, LASI…VFFG, IATL…AYGL, VVFC…VLVF, GAAL…FCYV, ALMV…SGLL, VLSI…GLSG, RVVI…LILI, VVSY…LDSL, IGAI…GLLL, and WLGI…VTIF.

It belongs to the multi antimicrobial extrusion (MATE) (TC 2.A.66.1) family.

It is found in the membrane. This is Protein DETOXIFICATION 16 from Arabidopsis thaliana (Mouse-ear cress).